The sequence spans 4250 residues: Dynein axonemal heavy chain 1 (4250 aa).

The interval 1-73 (MEECNKEGPS…KSPLTGTDKK (73 aa)) is disordered. The stem stretch occupies residues 1–1527 (MEECNKEGPS…YIRAVNAEFI (1527 aa)). Over residues 24 to 42 (PESHDLEKILQESNYHPER) the composition is skewed to basic and acidic residues. Residues 46 to 55 (NPDPKTPPLP) show a composition bias toward pro residues. AAA regions lie at residues 1528-1749 (YGYE…VISA), 1809-2042 (QAIR…NTVK), 2174-2434 (TMMP…VFQG), and 2532-2784 (DYNQ…LARH). Positions 1566–1573 (GPAGTGKT) match the GPAGTGKT motif motif. 1566–1573 (GPAGTGKT) serves as a coordination point for ATP. A CFDEFNR motif motif is present at residues 1616–1622 (CFDEFNR). ATP contacts are provided by residues 1847-1854 (GPTGSGKS), 2212-2219 (GPTGTGKT), and 2571-2578 (GVGGSGRS). Residues 2799 to 3097 (FSILIGQKKM…EELEMKCEQC (299 aa)) form a stalk region. Residues 3045–3128 (LREAQDDLEV…QETVENLENM (84 aa)) are a coiled coil. AAA stretches follow at residues 3182–3412 (LGNP…EIQA) and 3625–3844 (MQDF…QLKM).

The protein belongs to the dynein heavy chain family. Consists of at least two heavy chains and a number of intermediate and light chains.

The protein localises to the cytoplasm. Its subcellular location is the cytoskeleton. It is found in the cilium axoneme. It localises to the cell projection. The protein resides in the cilium. The protein localises to the flagellum. Force generating protein of cilia required for sperm flagellum motility. Produces force towards the minus ends of microtubules. Dynein has ATPase activity; the force-producing power stroke is thought to occur on release of ADP. Required in spermatozoa for the formation of the inner dynein arms and biogenesis of the axoneme. The protein is Dynein axonemal heavy chain 1 of Mus musculus (Mouse).